Consider the following 940-residue polypeptide: MDKIEVRGARTHNLKNINLTIPRDKLIVITGLSGSGKSSLAFDTLYAEGQRRYVESLSAYARQFLSLMEKPDVDHIEGLSPAISIEQKSTSHNPRSTVGTITEVYDYLRLLYARVGEPRCPEHQVPLKAQTISQMVDKVLELPEGSKMMLLATIVKERKGEHVKTLENLAAQGFIRARIDGETCDLTDPPKLELHKKHTIEVIVDRFKVRSDLQQRLAESFETALELSGGIVVVAPMEGDGEEQIFSANFACPHCGYSMRELEPRLFSFNNPAGACPTCDGLGVQQYFDPDRVIQDANLSLAQGAIRGWDQKNFYYFQMLTALAEHYDFDVHTPFNKLSKKIQEIILHGSGRTEIEFKYINDRGDIRLKKHPFEGILHNLERRYRDTESNSVREELAKYISNKPCSSCDGTRLKIEARNVFINDTALPTIVELSIADALTFFQELKLEGQRAQIAEKVMKEINDRLQFLVNVGLNYLNLSRSAETLSGGEAQRIRLASQIGAGLVGVMYVLDEPSIGLHQRDNERLLQTLTHLRNLGNTVLVVEHDEDAIRMADHVIDIGPGAGVHGGMVVAEGNVEEIIANPNSLTGQYLSGVKKIAVPEQRTPKDAKKTVELKGAVGNNLKNVDLSIPVGLFTCVTGVSGSGKSTLINDTFFKIAHTALNGATTATPAPYRSIQGLEHFDKVIDIDQSPIGRTPRSNPATYTGIFTPIRELFAGTQESRSRGYQPGRFSFNVRGGRCEACQGDGVIKVEMHFLPDVYVPCDVCKGKRYNRETLEVRYKGKTIDEVLDMTVEDAREFFDPVPVIARKLQTLMDVGLSYIRLGQSATTLSGGEAQRVKLARELSKRDTGKTLYILDEPTTGLHFHDIQQLLSVLHRLRDHGNTVVVIEHNLDVIKTADWIIDLGPEGGQGGGLIIAEGTPEDVAQIEASHTARFLKPLLN.

31 to 38 (GLSGSGKS) is an ATP binding site. The segment at 252–279 (CPHCGYSMRELEPRLFSFNNPAGACPTC) adopts a C4-type zinc-finger fold. 2 consecutive ABC transporter domains span residues 309-586 (WDQK…PNSL) and 606-936 (KDAK…RFLK). An ATP-binding site is contributed by 639-646 (GVSGSGKS). The segment at 739–765 (CEACQGDGVIKVEMHFLPDVYVPCDVC) adopts a C4-type zinc-finger fold.

Belongs to the ABC transporter superfamily. UvrA family. In terms of assembly, forms a heterotetramer with UvrB during the search for lesions.

Its subcellular location is the cytoplasm. The UvrABC repair system catalyzes the recognition and processing of DNA lesions. UvrA is an ATPase and a DNA-binding protein. A damage recognition complex composed of 2 UvrA and 2 UvrB subunits scans DNA for abnormalities. When the presence of a lesion has been verified by UvrB, the UvrA molecules dissociate. The chain is UvrABC system protein A from Vibrio cholerae serotype O1 (strain ATCC 39315 / El Tor Inaba N16961).